The sequence spans 260 residues: MSKRPGDIIISTPVSKVRRRLNFDSPYSSRAAVPIVQGTNKRRSWTYRPMYRKPRIYRMYRSPDVPRGCEGPCKVQSYEQRDDIKHTGIVRCVSDVTRGSGITHRVGKRFCVKSIYFLGKVWMDENIKKQNHTNQVMFFLVRDRRPYGNSPMDFGQVFNMFDNEPSTATVKNDLRDRFQVMRKFHATVIGGPSGMKEQALVKRFFKINSHVTLFIFIQEAAKYENHTENALLLYMACTHASNPVYATMKIRIYFYDSISN.

A Bipartite nuclear localization signal motif is present at residues lysine 3–arginine 20. A Nuclear localization signal motif is present at residues lysine 41 to arginine 55. A zinc finger spans residues cysteine 69–histidine 86. The Nuclear export signal motif lies at isoleucine 102–methionine 123. Positions lysine 202–arginine 251 match the Bipartite nuclear localization signal motif.

The protein belongs to the geminiviridae capsid protein family. Homomultimer. Binds to single-stranded and double-stranded viral DNA. Interacts (via nuclear localization signals) with host importin alpha-1a.

It is found in the virion. The protein localises to the host nucleus. Functionally, encapsidates the viral genome into characteristic twinned ('geminate') particles. Binds the genomic viral ssDNA and shuttles it into and out of the cell nucleus. Plays a role in protection of the genome from degradation, virus acquisition and transmission by insect vectors, infectivity, and systemic movement. The CP of monopartite geminiviruses is absolutely essential for virus movement. The protein is Capsid protein of Cynanchum acutum (Little mallow).